The chain runs to 233 residues: Protein DOUBLE-STRAND BREAK FORMATION (233 aa).

In terms of assembly, interacts with PRD1; this interaction facilitates a binding to PRD3. As to expression, specifically expressed in buds.

Its function is as follows. Required for meiotic double-strand break (DSB) formation, the initial event for meiotic recombination. This is Protein DOUBLE-STRAND BREAK FORMATION from Arabidopsis thaliana (Mouse-ear cress).